The primary structure comprises 539 residues: Carboxypeptidase Y homolog A (539 aa).

The N-terminal stretch at Met1–Val17 is a signal peptide. Positions Pro18 to Lys122 are excised as a propeptide. 5 disulfide bridges follow: Cys176–Cys416, Cys310–Cys324, Cys334–Cys357, Cys341–Cys350, and Cys379–Cys386. An N-linked (GlcNAc...) asparagine glycan is attached at Asn207. Residue Ser263 is part of the active site. Asp455 is an active-site residue. Asn506 carries N-linked (GlcNAc...) asparagine glycosylation. His517 is a catalytic residue.

The protein belongs to the peptidase S10 family.

Its subcellular location is the vacuole. It carries out the reaction Release of a C-terminal amino acid with broad specificity.. Vacuolar carboxypeptidase involved in degradation of small peptides. Digests preferentially peptides containing an aliphatic or hydrophobic residue in P1' position, as well as methionine, leucine or phenylalanine in P1 position of ester substrate. This chain is Carboxypeptidase Y homolog A (cpyA), found in Coccidioides posadasii (strain C735) (Valley fever fungus).